A 187-amino-acid polypeptide reads, in one-letter code: Pumilio homolog 26 (187 aa).

One copy of the Pumilio 1; degenerate repeat lies at 20 to 42 (VATEFLRVSNDVAELHKLSSKLT). The stretch at 43 to 78 (SDPYLFVEFVKTIRGFLSVQTALGLSGEIDTVFLQV) is one Pumilio 2; degenerate repeat. A Pumilio 3; degenerate repeat occupies 79 to 116 (IKGWFPDLITETFSFLIVVRIINLFNKRANSKVYPDIL). The stretch at 117 to 154 (RRIGNNALYLTRNPLRGICLVEKAINVRDPDCTVFIAL) is one Pumilio 4; degenerate repeat. One copy of the Pumilio 5 repeat lies at 155–187 (KLHSHYVELSFEELGSNIVEKLLSVGESGICGV).

Its subcellular location is the cytoplasm. Its function is as follows. Sequence-specific RNA-binding protein that regulates translation and mRNA stability by binding the 3'-UTR of target mRNAs. This is Pumilio homolog 26 (APUM26) from Arabidopsis thaliana (Mouse-ear cress).